A 486-amino-acid chain; its full sequence is Virulence sensor protein PhoQ (486 aa).

Residues 1–16 (MKKLLRLFFPLSLRVR) lie on the Cytoplasmic side of the membrane. Residues 17–37 (FLLATAAVVLVLSLAYGMVAL) traverse the membrane as a helical segment. Over 38–194 (IGYSVSFDKT…LKSSYMVWSW (157 aa)) the chain is Periplasmic. A divalent metal cation contacts are provided by Asp-151 and Asp-152. The chain crosses the membrane as a helical span at residues 195–215 (FIYVLSANLLLVIPLLWVAAW). The HAMP domain occupies 215–266 (WWSLRPIEALAKEVRELEEHNRELLNPATTRELTSLVRNLNRLLKSERERYD). Residues 216–486 (WSLRPIEALA…GRQHSAPKDE (271 aa)) lie on the Cytoplasmic side of the membrane. The Histidine kinase domain occupies 274-480 (DLTHSLKTPL…RMEVIFGRQH (207 aa)). At His-277 the chain carries Phosphohistidine; by autocatalysis. Residue Asn-385 participates in Mg(2+) binding. ATP-binding positions include 385–393 (NVLDNACKY), 415–420 (DDGPGI), and 434–446 (RVDTLRPGQGVGL). Gln-442 is a binding site for Mg(2+).

Homodimer.

It is found in the cell inner membrane. The enzyme catalyses ATP + protein L-histidine = ADP + protein N-phospho-L-histidine.. Member of the two-component regulatory system PhoP/PhoQ involved in virulence and adaptation to low Mg(2+) environments. In low periplasmic Mg(2+), PhoQ functions as a membrane-associated protein kinase that undergoes autophosphorylation and subsequently transfers the phosphate to PhoP, which results in the expression of PhoP-activated genes (PAG) and repression of PhoP-repressed genes (PRG). In high periplasmic Mg(2+), acts as a protein phosphatase that dephosphorylates phospho-PhoP, which results in the repression of PAG and may lead to expression of some PRG. Necessary for resistance to killing by polymorphonuclear leukocytes (PMNs) and cationic antimicrobial peptides (CAMP) they produce. The protein is Virulence sensor protein PhoQ (phoQ) of Shigella flexneri.